Reading from the N-terminus, the 235-residue chain is Small ribosomal subunit protein uS2 (235 aa).

The protein belongs to the universal ribosomal protein uS2 family.

The polypeptide is Small ribosomal subunit protein uS2 (Anoxybacillus flavithermus (strain DSM 21510 / WK1)).